A 434-amino-acid polypeptide reads, in one-letter code: Adenylosuccinate synthetase (434 aa).

Residues 22-28 (GDEGKGK) and 50-52 (GHT) contribute to the GTP site. The Proton acceptor role is filled by aspartate 23. Residues aspartate 23 and glycine 50 each contribute to the Mg(2+) site. IMP is bound by residues 23-26 (DEGK), 48-51 (NAGH), threonine 139, arginine 153, glutamine 234, threonine 249, and arginine 313. Histidine 51 functions as the Proton donor in the catalytic mechanism. 309-315 (ATTGRKR) contacts substrate. GTP contacts are provided by residues arginine 315, 341 to 343 (KLD), and 423 to 425 (SVG).

This sequence belongs to the adenylosuccinate synthetase family. Homodimer. The cofactor is Mg(2+).

It localises to the cytoplasm. The enzyme catalyses IMP + L-aspartate + GTP = N(6)-(1,2-dicarboxyethyl)-AMP + GDP + phosphate + 2 H(+). It functions in the pathway purine metabolism; AMP biosynthesis via de novo pathway; AMP from IMP: step 1/2. Plays an important role in the de novo pathway of purine nucleotide biosynthesis. Catalyzes the first committed step in the biosynthesis of AMP from IMP. The sequence is that of Adenylosuccinate synthetase from Chlorobium limicola (strain DSM 245 / NBRC 103803 / 6330).